The following is an 840-amino-acid chain: Wings apart-like protein 2 (840 aa).

Disordered regions lie at residues 1–37, 56–78, and 532–594; these read MMER…EPVD, SDND…FGSN, and FDLE…DHHV. Basic residues predominate over residues 546 to 557; the sequence is KQKKSKGQKRKG. The span at 558 to 567 shows a compositional bias: basic and acidic residues; sequence SYRDKKDERS. Polar residues predominate over residues 569–585; it reads QLFSSQEESNHGLNSQE. A WAPL domain is found at 764 to 819; the sequence is KEAEKMIVEAYSALLLAFLSTESRSIRNAIRDYLPKRDMAILVPVLDRFVAFHTTL.

This sequence belongs to the WAPL family. In terms of assembly, interacts with the cohesin complex throughout the cell cycle. Expressed in roots, leaves, buds and siliques.

It localises to the nucleus. Its subcellular location is the chromosome. Regulator of sister chromatid cohesion in meiosis which negatively regulates cohesin association with chromatin, acting as an antagonist of CTF7. Cohesion ensures that chromosome partitioning is accurate in both meiotic and mitotic cells and plays an important role in DNA repair. Essential for the prophase removal of cohesin during meiosis thus determining the timely release of meiotic cohesion. Important for proper spindle attachment and assembly during meiosis. Helps to prevent abnormal centromere association during prophase I in meiocytes. Required for early embryonic patterning. Also involved in chromosome segregation during mitosis. This chain is Wings apart-like protein 2, found in Arabidopsis thaliana (Mouse-ear cress).